A 380-amino-acid chain; its full sequence is tRNA-specific 2-thiouridylase MnmA (380 aa).

ATP contacts are provided by residues 10–17 (AMSGGVDS) and leucine 36. The active-site Nucleophile is the cysteine 106. The cysteines at positions 106 and 202 are disulfide-linked. Glycine 130 contributes to the ATP binding site. The segment at 152–154 (KNQ) is interaction with tRNA. Cysteine 202 acts as the Cysteine persulfide intermediate in catalysis. An interaction with tRNA region spans residues 308–309 (RY).

Belongs to the MnmA/TRMU family.

Its subcellular location is the cytoplasm. It catalyses the reaction S-sulfanyl-L-cysteinyl-[protein] + uridine(34) in tRNA + AH2 + ATP = 2-thiouridine(34) in tRNA + L-cysteinyl-[protein] + A + AMP + diphosphate + H(+). Catalyzes the 2-thiolation of uridine at the wobble position (U34) of tRNA, leading to the formation of s(2)U34. The polypeptide is tRNA-specific 2-thiouridylase MnmA (Leptospira biflexa serovar Patoc (strain Patoc 1 / Ames)).